We begin with the raw amino-acid sequence, 402 residues long: Acyl-[acyl-carrier-protein] desaturase 3, chloroplastic (402 aa).

Residues 1-32 (MSLTGCLPPRPPCSMRRRTSGGGASVSPVVAM) constitute a chloroplast transit peptide. Residues 1–66 (MSLTGCLPPR…EVPPQVTHTL (66 aa)) are disordered. Fe cation-binding residues include glutamate 139, glutamate 178, histidine 181, glutamate 231, glutamate 264, and histidine 267.

It belongs to the fatty acid desaturase type 2 family. As to quaternary structure, homodimer. It depends on Fe(2+) as a cofactor.

The protein localises to the plastid. It localises to the chloroplast. It participates in lipid metabolism; fatty acid metabolism. Functionally, introduces a cis double bond in the acyl chain of an acyl-[acyl-carrier protein]. The protein is Acyl-[acyl-carrier-protein] desaturase 3, chloroplastic of Oryza sativa subsp. japonica (Rice).